A 307-amino-acid chain; its full sequence is Dioxygenase swnH1 (307 aa).

3 residues coordinate Fe cation: H149, D151, and H227.

This sequence belongs to the PhyH family. As to quaternary structure, homodimer. Requires Fe cation as cofactor.

It functions in the pathway mycotoxin biosynthesis. Functionally, dioxygenase; part of the gene cluster that mediates the biosynthesis of swainsonine (SW), a cytotoxic fungal alkaloid and a potential cancer therapy drug. Swainsonine production occurs via a multibranched pathway and is dispensable for fungal colonization of plants and infection of insect hosts. The first step of swainsonine biosynthesis is the production of the precursor pipecolic acid (PA) via conversion of L-lysine (Lys) to 1-piperideine-6-carboxylate (P6C) by the aminotransferase swnA, the latter being further reduced to PA by the reductase swnR. PA can be converted from lysine by both the SW biosynthetic cluster and the unclustered genes such as lysine cyclodeaminase. The PKS-NRPS hybrid synthetase swnK uptakes and condensates PA and malonyl-CoA with and without skipping of the ketoreductase (KR) domain in order to produce 3 intermediates, 1-oxoindolizidine, (1S)-1-hydroxyindolizin, and (1R)-1-hydroxyindolizine; with the transisomer (1S)-1-hydroxyindolizin being predominant. The terminal thioester reductase (TE) domain of swnK is involved in reduction of the thioester bond to release the intermediate aldehydes. The oxidoreductase swnN could contribute to the reduction of 1-oxoindolizidine to (1S)-1-hydroxyindolizin and (1R)-1-hydroxyindolizine, contributing to the major route of SW production. The dioxygenase swnH2 would be responsible for the oxidization of (1R)-1-hydroxyindolizine into (1R,2S)-1,2-dihydroxyindolizine and of (1S)-1-hydroxyindolizin to yield both (1R,2S)-1,2-dihydroxyindolizine and (1S,2S)-1,2-dihydroxyindolizine. The dioxygenase swnH1 then performs the conversion of the 1,2-dihydroxyindolizine epimers to SW. The polypeptide is Dioxygenase swnH1 (Metarhizium robertsii (strain ARSEF 23 / ATCC MYA-3075) (Metarhizium anisopliae (strain ARSEF 23))).